The following is a 160-amino-acid chain: Cytosolic iron-sulfur assembly component 2A (160 aa).

Residues His89, His123, Glu150, and Glu153 each coordinate Zn(2+).

It belongs to the MIP18 family. As to quaternary structure, monomer and homodimer. Component of the CIA complex. Interacts with CIAO1. Interacts with IREB2. Interacts with APAF1.

The protein localises to the cytoplasm. Its function is as follows. Component of the cytosolic iron-sulfur protein assembly (CIA) complex, a multiprotein complex that mediates the incorporation of iron-sulfur cluster into extramitochondrial Fe/S proteins. As a CIA complex component and in collaboration with CIAO1 specifically matures ACO1 and stabilizes IREB2, connecting cytosolic iron-sulfur protein maturation with cellular iron regulation. May play a role in chromosome segregation through establishment of sister chromatid cohesion. May induce apoptosis in collaboration with APAF1. This Bos taurus (Bovine) protein is Cytosolic iron-sulfur assembly component 2A.